We begin with the raw amino-acid sequence, 187 residues long: Elongation factor P (187 aa).

This sequence belongs to the elongation factor P family.

The protein resides in the cytoplasm. Its pathway is protein biosynthesis; polypeptide chain elongation. Functionally, involved in peptide bond synthesis. Stimulates efficient translation and peptide-bond synthesis on native or reconstituted 70S ribosomes in vitro. Probably functions indirectly by altering the affinity of the ribosome for aminoacyl-tRNA, thus increasing their reactivity as acceptors for peptidyl transferase. This is Elongation factor P from Mycobacterium marinum (strain ATCC BAA-535 / M).